The sequence spans 395 residues: Cuticlin-5 (395 aa).

A signal peptide spans 1–18 (MNFILAVFAIILLQAVRG). The Extracellular segment spans residues 19–358 (EIDNAIVGDP…ELCMTAIGTT (340 aa)). The ZP domain maps to 46-291 (SCVGNFIIKV…DYCDVPSCPD (246 aa)). Residues Asn90 and Asn307 are each glycosylated (N-linked (GlcNAc...) asparagine). The chain crosses the membrane as a helical span at residues 359–379 (LLVFLNAFLFIISLVSIVHVC). Residues 380-395 (CFRTSPKLEKTKSTML) lie on the Cytoplasmic side of the membrane.

It is found in the cell membrane. In terms of biological role, plays a role in alae formation in L1 and dauer stage larvae. The protein is Cuticlin-5 of Caenorhabditis elegans.